Reading from the N-terminus, the 252-residue chain is Acetoacetate decarboxylase (252 aa).

Catalysis depends on lysine 116, which acts as the Schiff-base intermediate with acetoacetate.

It belongs to the ADC family.

It carries out the reaction acetoacetate + H(+) = acetone + CO2. In terms of biological role, catalyzes the conversion of acetoacetate to acetone and carbon dioxide. The polypeptide is Acetoacetate decarboxylase (Paraburkholderia phytofirmans (strain DSM 17436 / LMG 22146 / PsJN) (Burkholderia phytofirmans)).